Reading from the N-terminus, the 437-residue chain is Acyl-coenzyme A thioesterase 2, chloroplastic (437 aa).

The N-terminal 13 residues, methionine 1–valine 13, are a transit peptide targeting the chloroplast. 2 consecutive HotDog ACOT-type domains span residues isoleucine 89–lysine 211 and arginine 287–alanine 404.

Belongs to the acyl coenzyme A hydrolase family. Mostly expressed at low levels in glandular trichomes (lupulin glands), and, to a lower extent, in stems, leaves, flowers and cones.

It is found in the plastid. It localises to the chloroplast. Functionally, acyl-CoA thioesterases are a group of enzymes that catalyze the hydrolysis of acyl-CoAs to the free fatty acid and coenzyme A (CoASH), providing the potential to regulate intracellular levels of acyl-CoAs, free fatty acids and CoASH. The chain is Acyl-coenzyme A thioesterase 2, chloroplastic from Humulus lupulus (European hop).